We begin with the raw amino-acid sequence, 529 residues long: Bifunctional purine biosynthesis protein PurH (529 aa).

The region spanning 1–148 is the MGS-like domain; that stretch reads MQQRRPVRRA…KNHKDVAIVV (148 aa).

The protein belongs to the PurH family.

It carries out the reaction (6R)-10-formyltetrahydrofolate + 5-amino-1-(5-phospho-beta-D-ribosyl)imidazole-4-carboxamide = 5-formamido-1-(5-phospho-D-ribosyl)imidazole-4-carboxamide + (6S)-5,6,7,8-tetrahydrofolate. It catalyses the reaction IMP + H2O = 5-formamido-1-(5-phospho-D-ribosyl)imidazole-4-carboxamide. It participates in purine metabolism; IMP biosynthesis via de novo pathway; 5-formamido-1-(5-phospho-D-ribosyl)imidazole-4-carboxamide from 5-amino-1-(5-phospho-D-ribosyl)imidazole-4-carboxamide (10-formyl THF route): step 1/1. It functions in the pathway purine metabolism; IMP biosynthesis via de novo pathway; IMP from 5-formamido-1-(5-phospho-D-ribosyl)imidazole-4-carboxamide: step 1/1. This Salmonella paratyphi A (strain ATCC 9150 / SARB42) protein is Bifunctional purine biosynthesis protein PurH.